Here is a 432-residue protein sequence, read N- to C-terminus: MDRIRIVGGTPLKGTITIGGAKNAALALMPACLLTEETLALSNLPHLVDITTMANLLAQHGVTMALNGDAANGGHTGRVLELTAAHIGNTTAPYDLVRKMRASVLVLGPLLARFGEARVSLPGGCAIGTRPVDLHLKALEQMGAKIELDGGYIIASVQGRLKGAHVIFPQITVGGTENILMAATLAEGETVIANAAREPEITDLAECLVAMGAKIEGIGTGTLKVQGVERLHGAEYSVVPDRIETGTYAVAAAITRGDIELVGARFDLMESVNKVLTECGVHVEETPRGMRVRADQGEITGVDIMTEPYPGFPTDMQAQLMALMSTAKGASMITETIFENRFMHVPEMTRMGARINVHGSSAIVRGAPKLSGAQVMATDLRASVSLVLAALAAEGETIVNRVYHLDRGYERVEEKLAACGAKIERLKDGVAE.

A phosphoenolpyruvate-binding site is contributed by 22–23 (KN). Arginine 101 lines the UDP-N-acetyl-alpha-D-glucosamine pocket. Residue cysteine 125 is the Proton donor of the active site. 2-(S-cysteinyl)pyruvic acid O-phosphothioketal is present on cysteine 125. UDP-N-acetyl-alpha-D-glucosamine is bound by residues 130–134 (RPVDL), aspartate 315, and isoleucine 337.

Belongs to the EPSP synthase family. MurA subfamily.

Its subcellular location is the cytoplasm. It catalyses the reaction phosphoenolpyruvate + UDP-N-acetyl-alpha-D-glucosamine = UDP-N-acetyl-3-O-(1-carboxyvinyl)-alpha-D-glucosamine + phosphate. It functions in the pathway cell wall biogenesis; peptidoglycan biosynthesis. Cell wall formation. Adds enolpyruvyl to UDP-N-acetylglucosamine. The protein is UDP-N-acetylglucosamine 1-carboxyvinyltransferase of Paramagnetospirillum magneticum (strain ATCC 700264 / AMB-1) (Magnetospirillum magneticum).